The following is a 713-amino-acid chain: Polyribonucleotide nucleotidyltransferase (713 aa).

2 residues coordinate Mg(2+): Asp485 and Asp491. Positions Pro552–Ile611 constitute a KH domain. Residues Gly621–Lys689 form the S1 motif domain. A disordered region spans residues Asp694–Glu713. The span at Asn701 to Glu713 shows a compositional bias: polar residues.

The protein belongs to the polyribonucleotide nucleotidyltransferase family. As to quaternary structure, component of the RNA degradosome, which is a multiprotein complex involved in RNA processing and mRNA degradation. It depends on Mg(2+) as a cofactor.

The protein localises to the cytoplasm. It carries out the reaction RNA(n+1) + phosphate = RNA(n) + a ribonucleoside 5'-diphosphate. Functionally, involved in mRNA degradation. Catalyzes the phosphorolysis of single-stranded polyribonucleotides processively in the 3'- to 5'-direction. This chain is Polyribonucleotide nucleotidyltransferase, found in Histophilus somni (strain 2336) (Haemophilus somnus).